The following is a 1091-amino-acid chain: Exonuclease/helicase subunit RexB (1091 aa).

The protein belongs to the helicase family. AddB/RexB type 2 subfamily. Heterodimer of RexA (AddA) and RexB. It depends on Mg(2+) as a cofactor.

Involved in DNA double-strand break repair. Is not involved in recombination during natural competence or in plasmid establishment. Its function is as follows. The heterodimer acts as both an ATP-dependent DNA helicase and an ATP-dependent, dual-direction single-stranded exonuclease. Recognizes the chi site generating a DNA molecule suitable for the initiation of homologous recombination. This subunit has 5' -&gt; 3' nuclease activity but not helicase activity. This is Exonuclease/helicase subunit RexB from Streptococcus pneumoniae serotype 4 (strain ATCC BAA-334 / TIGR4).